We begin with the raw amino-acid sequence, 206 residues long: Uracil phosphoribosyltransferase (206 aa).

5-phospho-alpha-D-ribose 1-diphosphate is bound by residues R76, R101, and 128 to 136 (DPMLATGGS). Uracil contacts are provided by residues I191 and 196–198 (GDA). Position 197 (D197) interacts with 5-phospho-alpha-D-ribose 1-diphosphate.

Belongs to the UPRTase family. It depends on Mg(2+) as a cofactor.

The catalysed reaction is UMP + diphosphate = 5-phospho-alpha-D-ribose 1-diphosphate + uracil. Its pathway is pyrimidine metabolism; UMP biosynthesis via salvage pathway; UMP from uracil: step 1/1. Its activity is regulated as follows. Allosterically activated by GTP. Its function is as follows. Catalyzes the conversion of uracil and 5-phospho-alpha-D-ribose 1-diphosphate (PRPP) to UMP and diphosphate. The sequence is that of Uracil phosphoribosyltransferase from Malacoplasma penetrans (strain HF-2) (Mycoplasma penetrans).